Reading from the N-terminus, the 405-residue chain is GTPase Obg (405 aa).

Residues 1-159 form the Obg domain; sequence MKFVDEVSIF…RDLKLELKVL (159 aa). Residues 127–148 are disordered; that stretch reads NTRFKSSTNRAPRQTTPGKPGD. Residues 129-143 are compositionally biased toward polar residues; the sequence is RFKSSTNRAPRQTTP. The OBG-type G domain maps to 160 to 333; the sequence is ADVGLLGLPN…LSQAIMRYLD (174 aa). Residues 166-173, 191-195, 213-216, 283-286, and 314-316 each bind GTP; these read GLPNAGKS, FTTLV, DIPG, NKAD, and SAL. Ser173 and Thr193 together coordinate Mg(2+). A disordered region spans residues 373 to 405; the sequence is LRRAGVKSVEEADDDDFDDDDDDEGGAEIIYVR. The segment covering 383–398 has biased composition (acidic residues); that stretch reads EADDDDFDDDDDDEGG.

This sequence belongs to the TRAFAC class OBG-HflX-like GTPase superfamily. OBG GTPase family. As to quaternary structure, monomer. Mg(2+) serves as cofactor.

The protein localises to the cytoplasm. Functionally, an essential GTPase which binds GTP, GDP and possibly (p)ppGpp with moderate affinity, with high nucleotide exchange rates and a fairly low GTP hydrolysis rate. Plays a role in control of the cell cycle, stress response, ribosome biogenesis and in those bacteria that undergo differentiation, in morphogenesis control. In Stutzerimonas stutzeri (strain A1501) (Pseudomonas stutzeri), this protein is GTPase Obg.